Here is a 1515-residue protein sequence, read N- to C-terminus: MRLGAALQAAALLTASLWSHPLLAASDDPAFKTTKLDHYPFNLNYFEDSDIVLYQDEARGTISRSEDAGATWTLVKDIEEGKAFQLVMHPFDRKRAYVLTSPGIHHFRTHDQGRTWQDFLADTEMTMFRLDILSFHATDPDRIIFNGMDCKEGKFFCEEVAMYTTDGFTSDAKFLRGSTSGCSWAKSSKLFTTGQDDLDKNRILCVVRDHFSPLKQDQRLMISDNFFSAKDAGGVIQEFEPNLDMTRPIQGVVNVAVVKKYLLVAASSMNTDEMSLFVSDDTLKWHRAMFPTDHKINQESYTVLESTEYSIQVDVMTTHPSNPMGVMYTSNSNGTFFTRNIEHTNRNHRGHVDFEKITGVQGIFMVNKVDNAEEVEKDRRGKKKIVSEITFDDGRTFEPIHADKERLHLHSVTELINAGRVFSSPAPGLVMGNGNTGKHLESWKDASLYISDDAGLTWIKGPNGPHKYEFGDQGSVLLAVMQAEEVDEVKYSLNHGKDWKTAKLPDDLKVKPIILTTTQDSTSLKFILIGEGKGRDEFHIVAIDFSSMHEATCKDSDMEDWYARVDDKGKATCLMGHTQKYRRRKKDADCFVKQEFKDPVPETKDCECSDQDFECDYNFKRDGKECVLVGTVVAPDGACKNAGPDDTFKGSSGWRLIPGNTCKRASGAQKDDLVDRKCKETSEPTPSEPSGNISTTPHNFSGDWLDFEKHYLEKGAESMDENEVVIARPINAQNAGQIFLTKDHGKTWHMPEALKDKNIWGIVTHQYFKEMAFFVQDTGSVIYTVDHGEHFHDFKAPGNGIDPDTKPLVFHPDHKDWMIWIGKKCEENTCYREASFSQDRGDNWKSIARYVYKCEFTGSSSYKFRSQDQIICSIQSREGNEKNIPFDLVSSNDLFKTSEVRQKNIKDFATMAEFIVVAAEDPERKSLKAFASLDGDSYAATRFPSNLDVKEERAFTILDSSTHAVKLFVPSPAQKDRCVGSIAKSNSNGTDYVVSITGVNCDENYFVDFEKMLTLEGVILVNIVANRENTNEPKKRRSLISHSDGATWSYLPPPRVDAEGKNYPCTSSDNGDENCALHIHGYTERKDHGKTYSSAGAVGLMFGVGNVGSTLGDIKDADTFLTTDAGISWKSVKKGAWRWAYGDQGSILMLVPSTKTKMVSYTTDEGETWNDHNFTDEPVDVLDMTTVSSGGSRNFLLWCRRSDKTVFAVNLDLTGLANTACKQVDDNDSESDYYAWSPSHPLRPDDCLFGHKSYYLRKKTDRKCYNKHKITPVFKMDVCECTREDFECDYNYELEGVGRNCVLAKGAQPMSREDWCSAHPKESTWYEPSGFRRIPISTCKEGRVFDNYTTSWPCPGHEEEYERQHGGPGGFTIFLIVILCVGAAGAVGVWVHRRWESGGFGQIRLGEQSSSGISFLDPDSPWVRYPVVAVSATVALVGALPLLVGALWRTTKTTVERWGIFGGVGRGTYGSLGLGGGSGARRFTTRDSFARGRSDYAGIDEDEGELLGDDSDEEV.

The first 24 residues, 1–24 (MRLGAALQAAALLTASLWSHPLLA), serve as a signal peptide directing secretion. Topologically, residues 25 to 1370 (ASDDPAFKTT…YERQHGGPGG (1346 aa)) are lumenal. 2 BNR repeats span residues 64–73 (RSEDAGATWT) and 107–117 (FRTHDQGRTWQ). An N-linked (GlcNAc...) asparagine glycan is attached at Asn-333. 2 BNR repeats span residues 449–458 (YISDDAGLTW) and 491–500 (YSLNHGKDWK). The span at 673 to 682 (LVDRKCKETS) shows a compositional bias: basic and acidic residues. Residues 673-698 (LVDRKCKETSEPTPSEPSGNISTTPH) are disordered. The segment covering 683–698 (EPTPSEPSGNISTTPH) has biased composition (polar residues). Asn-692 and Asn-699 each carry an N-linked (GlcNAc...) asparagine glycan. 2 BNR repeats span residues 739-749 (FLTKDHGKTWH) and 836-845 (FSQDRGDNWK). The N-linked (GlcNAc...) asparagine glycan is linked to Asn-988. BNR repeat units follow at residues 1040-1050 (ISHSDGATWSY), 1120-1130 (FLTTDAGISWK), and 1161-1170 (YTTDEGETWN). N-linked (GlcNAc...) asparagine glycans are attached at residues Asn-1173, Asn-1227, and Asn-1347. The chain crosses the membrane as a helical span at residues 1371-1391 (FTIFLIVILCVGAAGAVGVWV). The Cytoplasmic portion of the chain corresponds to 1392-1426 (HRRWESGGFGQIRLGEQSSSGISFLDPDSPWVRYP). The chain crosses the membrane as a helical span at residues 1427–1447 (VVAVSATVALVGALPLLVGAL). The Lumenal portion of the chain corresponds to 1448–1515 (WRTTKTTVER…LLGDDSDEEV (68 aa)). The segment at 1494-1515 (SDYAGIDEDEGELLGDDSDEEV) is disordered. The span at 1498–1515 (GIDEDEGELLGDDSDEEV) shows a compositional bias: acidic residues.

The protein belongs to the VPS10-related sortilin family.

Its subcellular location is the golgi apparatus. It is found in the trans-Golgi network membrane. The protein localises to the prevacuolar compartment membrane. Functionally, functions as a sorting receptor in the Golgi compartment required for the intracellular sorting and delivery of soluble vacuolar proteins, like carboxypeptidase Y (CPY) and proteinase A. Executes multiple rounds of sorting by cycling between the late Golgi and a prevacuolar endosome-like compartment. The polypeptide is Vacuolar protein sorting/targeting protein 10 (VPS10) (Pyricularia oryzae (strain 70-15 / ATCC MYA-4617 / FGSC 8958) (Rice blast fungus)).